The following is a 216-amino-acid chain: MLEIFDVNHTLLSETKSGELFTLRKETFKDRLNWAVQCTDGMEFDQYDNNNTTYLFGIKDNTVICSLRFIETKYPNMITGTFFPYFKEINIPEGNYLESSRFFVDKSRAKDILGNEYPISSMLFLSMINYSKDKGYDGIYTIVSHPMLTILKRSGWGIRVVEQGLSEKEERVYLVFLPVDDENQEALARRINRSGTFMSNELKQWPLRVPAAIAQA.

Belongs to the autoinducer synthase family.

The enzyme catalyses a fatty acyl-[ACP] + S-adenosyl-L-methionine = an N-acyl-L-homoserine lactone + S-methyl-5'-thioadenosine + holo-[ACP] + H(+). Required for the synthesis of OHHL (N-(3-oxohexanoyl)-L-homoserine lactone), an autoinducer molecule which binds to CarR and thus acts in the control of the biosynthesis of carbapenem antibiotics. The protein is Acyl-homoserine-lactone synthase (carI) of Pectobacterium carotovorum subsp. carotovorum (Erwinia carotovora subsp. carotovora).